We begin with the raw amino-acid sequence, 642 residues long: Threonine--tRNA ligase (642 aa).

The TGS domain occupies 1–61 (MPVITLPDGS…VDDASVAIIT (61 aa)). The segment at 243 to 534 (DHRKIGKQLD…LTEEYAGFFP (292 aa)) is catalytic. Residues Cys-334, His-385, and His-511 each coordinate Zn(2+).

The protein belongs to the class-II aminoacyl-tRNA synthetase family. In terms of assembly, homodimer. It depends on Zn(2+) as a cofactor.

It is found in the cytoplasm. It catalyses the reaction tRNA(Thr) + L-threonine + ATP = L-threonyl-tRNA(Thr) + AMP + diphosphate + H(+). In terms of biological role, catalyzes the attachment of threonine to tRNA(Thr) in a two-step reaction: L-threonine is first activated by ATP to form Thr-AMP and then transferred to the acceptor end of tRNA(Thr). Also edits incorrectly charged L-seryl-tRNA(Thr). This chain is Threonine--tRNA ligase, found in Erwinia tasmaniensis (strain DSM 17950 / CFBP 7177 / CIP 109463 / NCPPB 4357 / Et1/99).